The chain runs to 140 residues: Small ribosomal subunit protein eS17y (140 aa).

It belongs to the eukaryotic ribosomal protein eS17 family.

The polypeptide is Small ribosomal subunit protein eS17y (RPS17B) (Arabidopsis thaliana (Mouse-ear cress)).